The sequence spans 484 residues: Auxin transporter-like protein 2 (484 aa).

At 1 to 59 the chain is on the cytoplasmic side; it reads MLPQKQGEEAIVSSFNETDQQEGVVGREEEVEDHSFSVKNFLWHGGSVWDAWFSCASNQ. A helical transmembrane segment spans residues 60–77; it reads VAQVLLTLPYSFSQLGML. The Extracellular segment spans residues 78 to 79; sequence SG. The chain crosses the membrane as a helical span at residues 80-100; that stretch reads ILLQVFYGILGSWTAYLISVL. At 101–135 the chain is on the cytoplasmic side; it reads YVEYRSRKEKENVNFKNHVIQWFEVLDGLLGPYWK. The chain crosses the membrane as a helical span at residues 136–156; sequence ALGLAFNCTFLLFGSVIQLIA. Residues 157-172 are Extracellular-facing; sequence CASNIYYINDNLDKRT. A helical transmembrane segment spans residues 173–193; sequence WTYIFGACCATTVFIPSFHNY. Residues 194–196 lie on the Cytoplasmic side of the membrane; sequence RIW. Residues 197 to 217 form a helical membrane-spanning segment; sequence SFLGLGMTTYTAWYLTIASIV. At 218 to 232 the chain is on the extracellular side; sequence HGQAENVTHTGPKKL. An N-linked (GlcNAc...) asparagine glycan is attached at N223. A helical transmembrane segment spans residues 233-253; that stretch reads VLYFTGATNILYTFGGHAVTV. The Cytoplasmic portion of the chain corresponds to 254–266; it reads EIMHAMWKPQKFK. A helical transmembrane segment spans residues 267 to 287; it reads YIYLMATLYVFTLTIPSATAV. Residues 288 to 314 are Extracellular-facing; it reads YWAFGDELLNHSNAFSLLPKNGWRDGA. N297 is a glycosylation site (N-linked (GlcNAc...) asparagine). The helical transmembrane segment at 315 to 335 threads the bilayer; that stretch reads VILMLIHQFITFGFACTPLYF. Residues 336–356 lie on the Cytoplasmic side of the membrane; sequence VWEKVIGMHDTRSICLRALAR. The chain crosses the membrane as a helical span at residues 357-377; the sequence is LPVVIPIWFLAIIFPFFGPIN. Residue S378 is a topological domain, extracellular. The helical transmembrane segment at 379-399 threads the bilayer; that stretch reads AVGALLVSFTVYIIPSAAHML. Topologically, residues 400–425 are cytoplasmic; it reads TYRKASARKNAAEKPPFFMPSWTAMY. The chain crosses the membrane as a helical span at residues 426 to 446; sequence IFNAFIVIWVLVVGFGFGGWA. At 447-484 the chain is on the extracellular side; it reads SMTNFIRQIDTFGLFAKCYQCKPPPVMAAAPPPHALHH.

It belongs to the amino acid/polyamine transporter 2 family. Amino acid/auxin permease (AAAP) (TC 2.A.18.1) subfamily. Shoots and roots of nodulating plants. Higher levels in roots, flowers and stems, lower in nodules, leaves, petioles and shoot apices.

It is found in the cell membrane. Carrier protein involved in proton-driven auxin influx. Mediates the formation of auxin gradient from developing leaves (site of auxin biosynthesis) to tips by contributing to the loading of auxin in vascular tissues and facilitating acropetal (base to tip) auxin transport within inner tissues of the root apex, and basipetal (tip to base) auxin transport within outer tissues of the root apex. May be involved in lateral roots and nodules formation. The polypeptide is Auxin transporter-like protein 2 (LAX2) (Medicago truncatula (Barrel medic)).